A 603-amino-acid polypeptide reads, in one-letter code: UvrABC system protein C (603 aa).

Positions 13–92 (NGPGVYLMKD…IRKHKPRYNI (80 aa)) constitute a GIY-YIG domain. Residues 202–237 (NDLLQKIKEQMAAASERQEYELAARLRDRMFAIQAT) enclose the UVR domain.

It belongs to the UvrC family. Interacts with UvrB in an incision complex.

It is found in the cytoplasm. Functionally, the UvrABC repair system catalyzes the recognition and processing of DNA lesions. UvrC both incises the 5' and 3' sides of the lesion. The N-terminal half is responsible for the 3' incision and the C-terminal half is responsible for the 5' incision. The sequence is that of UvrABC system protein C from Desulfatibacillum aliphaticivorans.